The sequence spans 332 residues: L-lactate dehydrogenase A chain (332 aa).

NAD(+) contacts are provided by residues 29-57 (GMVG…MEDK) and arginine 99. Substrate is bound by residues arginine 106, asparagine 138, and arginine 169. Residue asparagine 138 participates in NAD(+) binding. The active-site Proton acceptor is the histidine 193. Residue threonine 248 coordinates substrate.

Belongs to the LDH/MDH superfamily. LDH family. Homotetramer.

The protein resides in the cytoplasm. The enzyme catalyses (S)-lactate + NAD(+) = pyruvate + NADH + H(+). Its pathway is fermentation; pyruvate fermentation to lactate; (S)-lactate from pyruvate: step 1/1. Functionally, interconverts simultaneously and stereospecifically pyruvate and lactate with concomitant interconversion of NADH and NAD(+). The chain is L-lactate dehydrogenase A chain (ldha) from Eleginops maclovinus (Patagonian blennie).